Consider the following 78-residue polypeptide: Small integral membrane protein 10-like protein 2A (78 aa).

This chain is Small integral membrane protein 10-like protein 2A, found in Homo sapiens (Human).